A 569-amino-acid chain; its full sequence is Serine/threonine-protein kinase gad8 (569 aa).

The segment at 19–63 (GLNSGGSSFTRGLKNSTLSSTSSRKSSDEKSRKSSEDKRSPQSTV) is disordered. A compositionally biased stretch (low complexity) spans 31 to 42 (LKNSTLSSTSSR). The segment covering 43–58 (KSSDEKSRKSSEDKRS) has biased composition (basic and acidic residues). Positions 45-202 (SDEKSRKSSE…IVNKLTDEWV (158 aa)) constitute a C2 domain. The 256-residue stretch at 230-485 (FELLKVVGKG…AQEIKNHPFF (256 aa)) folds into the Protein kinase domain. Residues 236–244 (VGKGSFGKV) and K259 each bind ATP. The active-site Proton acceptor is the D353. Position 387 is a phosphothreonine; by ksg1 (T387). In terms of domain architecture, AGC-kinase C-terminal spans 486–557 (DDIDWKKLCA…QRPTTIDTSD (72 aa)). Phosphoserine; by TORC2 is present on residues S527 and S546.

The protein belongs to the protein kinase superfamily. AGC Ser/Thr protein kinase family. Post-translationally, phosphorylated by ksg1 and target of rapamycin complex 2 (TORC2), affecting the kinase activity of gad8 in a nutrient-dependent manner.

It carries out the reaction L-seryl-[protein] + ATP = O-phospho-L-seryl-[protein] + ADP + H(+). The catalysed reaction is L-threonyl-[protein] + ATP = O-phospho-L-threonyl-[protein] + ADP + H(+). In terms of biological role, involved in a signaling module for sexual development and cell growth under stressed conditions. Required for G1 arrest under nitrogen starvation and for growth at high temperature and osmolarity. The chain is Serine/threonine-protein kinase gad8 from Schizosaccharomyces pombe (strain 972 / ATCC 24843) (Fission yeast).